A 141-amino-acid polypeptide reads, in one-letter code: MAKKVVGMIKLQLPAGKATPAPPVGPALGQHGVNIMAFCKEYNAKTANQAGMTIPVIISVYQDRSFSFILKTPPAAVLIKKAAGLDSGSGEPNKTKVGKITKAQLKEIAETKMPDLNAGSVESAMSMIAGTARSMGITVEE.

This sequence belongs to the universal ribosomal protein uL11 family. Part of the ribosomal stalk of the 50S ribosomal subunit. Interacts with L10 and the large rRNA to form the base of the stalk. L10 forms an elongated spine to which L12 dimers bind in a sequential fashion forming a multimeric L10(L12)X complex. Post-translationally, one or more lysine residues are methylated.

In terms of biological role, forms part of the ribosomal stalk which helps the ribosome interact with GTP-bound translation factors. The protein is Large ribosomal subunit protein uL11 of Clostridium novyi (strain NT).